The sequence spans 269 residues: Protein OPG079 (269 aa).

Belongs to the orthopoxvirus OPG079 family. In terms of assembly, homoomultimer (Potential). Interacts with the small subunit of ribonucleotide reductase.

The protein resides in the host cytoplasm. Its function is as follows. Plays an essential role in viral DNA replication. Binds to ssDNA with high affinity and localizes to cytoplasmic factories where nascent viral genomes accumulate. May disrupt loops, hairpins and other secondary structures present on ssDNA to reduce and eliminate pausing of viral DNA polymerase at specific sites during elongation. The chain is Protein OPG079 (OPG079) from Cynomys gunnisoni (Gunnison's prairie dog).